The sequence spans 376 residues: Thymidine kinase (376 aa).

Positions 1–44 are disordered; the sequence is MASYPGHQHASAFDQAARSRGHSNRRTALRPRRQQEATEVRPEQ. Basic residues predominate over residues 19–32; sequence SRGHSNRRTALRPR. A compositionally biased stretch (basic and acidic residues) spans 33 to 44; that stretch reads RQQEATEVRPEQ. ATP is bound at residue 56–63; it reads GPHGMGKT. Glu-83 acts as the Proton acceptor in catalysis. Residues Tyr-101 and Gln-125 each contribute to the substrate site. Position 216 (Arg-216) interacts with ATP. Residue Arg-222 coordinates substrate. Residues 260–280 form a disordered region; sequence GQLSGTAVPPQGAEPQSNAGP.

Belongs to the herpesviridae thymidine kinase family. In terms of assembly, homodimer.

It catalyses the reaction thymidine + ATP = dTMP + ADP + H(+). Its function is as follows. Catalyzes the transfer of the gamma-phospho group of ATP to thymidine to generate dTMP in the salvage pathway of pyrimidine synthesis. The dTMP serves as a substrate for DNA polymerase during viral DNA replication. Allows the virus to be reactivated and to grow in non-proliferative cells lacking a high concentration of phosphorylated nucleic acid precursors. This Human herpesvirus 1 (strain SC16) (HHV-1) protein is Thymidine kinase.